The sequence spans 80 residues: Cell division activator CedA (80 aa).

It belongs to the CedA family.

Activates the cell division inhibited by chromosomal DNA over-replication. The chain is Cell division activator CedA from Salmonella choleraesuis (strain SC-B67).